Reading from the N-terminus, the 203-residue chain is MKLRWLLILVVFLAGCSSKHDYTNPPWNPEVPVKRAMQWMPISEKAGAAWGVDPQLITAIIAIESGGNPAVVSKSGAVGLMQLKPSTSGRDVYRRMGWRGEPSVSELKNPERNISMGAAYLSILENGPLAGIKDPQVMRYAVVVSYANGAGALLRTFSSDRQDAIDEINDLDADEFFEHVVKKHPAPQAPRYIWKLQKALDAM.

The first 15 residues, Met-1–Gly-15, serve as a signal peptide directing secretion. The N-palmitoyl cysteine moiety is linked to residue Cys-16. Cys-16 carries the S-diacylglycerol cysteine lipid modification.

It belongs to the transglycosylase Slt family.

It is found in the cell outer membrane. It catalyses the reaction Endolytic cleavage of the (1-&gt;4)-beta-glycosidic linkage between N-acetylmuramic acid (MurNAc) and N-acetylglucosamine (GlcNAc) residues in peptidoglycan with concomitant formation of a 1,6-anhydrobond in the MurNAc residue.. Functionally, murein-degrading enzyme. May play a role in recycling of muropeptides during cell elongation and/or cell division. Preferentially cleaves at a distance of more than two disaccharide units from the ends of the glycan chain. In Klebsiella pneumoniae (strain 342), this protein is Endo-type membrane-bound lytic murein transglycosylase A.